A 688-amino-acid polypeptide reads, in one-letter code: DNA ligase (688 aa).

Residues aspartate 42–aspartate 46, serine 91–leucine 92, and glutamate 128 each bind NAD(+). Lysine 130 (N6-AMP-lysine intermediate) is an active-site residue. 4 residues coordinate NAD(+): arginine 151, glutamate 188, lysine 305, and lysine 329. Residues cysteine 423, cysteine 426, cysteine 441, and cysteine 447 each contribute to the Zn(2+) site. The BRCT domain maps to alanine 608–leucine 688.

Belongs to the NAD-dependent DNA ligase family. LigA subfamily. Mg(2+) serves as cofactor. Mn(2+) is required as a cofactor.

The enzyme catalyses NAD(+) + (deoxyribonucleotide)n-3'-hydroxyl + 5'-phospho-(deoxyribonucleotide)m = (deoxyribonucleotide)n+m + AMP + beta-nicotinamide D-nucleotide.. Functionally, DNA ligase that catalyzes the formation of phosphodiester linkages between 5'-phosphoryl and 3'-hydroxyl groups in double-stranded DNA using NAD as a coenzyme and as the energy source for the reaction. It is essential for DNA replication and repair of damaged DNA. The polypeptide is DNA ligase (Paraburkholderia phytofirmans (strain DSM 17436 / LMG 22146 / PsJN) (Burkholderia phytofirmans)).